The sequence spans 1005 residues: DNA polymerase (1005 aa).

Belongs to the DNA polymerase type-B family. As to quaternary structure, interacts with OPG148. Component of the Uracil-DNA glycosylase(UDG)-OPG148-polymerase complex; OPG148 and OPG116/UDG form a heterodimeric processivity factor that associates with OPG071 to form the processive polymerase holoenzyme.

The enzyme catalyses DNA(n) + a 2'-deoxyribonucleoside 5'-triphosphate = DNA(n+1) + diphosphate. Functionally, catalyzes DNA synthesis. Acquires processivity by associating with a heterodimeric processivity factor comprised of the viral OPG148 and OPG116 proteins, thereby forming the DNA polymerase holoenzyme. Displays 3'- to 5' exonuclease activity. Might participate in viral DNA recombination. Does not perform OPG116/D4synthesis across an abasic site. In Variola virus (isolate Human/India/Ind3/1967) (VARV), this protein is DNA polymerase (OPG071).